A 373-amino-acid chain; its full sequence is Queuine tRNA-ribosyltransferase accessory subunit 2 (373 aa).

Residues C320, C322, C325, and H351 each contribute to the Zn(2+) site.

It belongs to the queuine tRNA-ribosyltransferase family. QTRT2 subfamily. Heterodimer of a catalytic subunit and an accessory subunit. Zn(2+) is required as a cofactor.

It is found in the cytoplasm. Non-catalytic subunit of the queuine tRNA-ribosyltransferase (TGT) that catalyzes the base-exchange of a guanine (G) residue with queuine (Q) at position 34 (anticodon wobble position) in tRNAs with GU(N) anticodons (tRNA-Asp, -Asn, -His and -Tyr), resulting in the hypermodified nucleoside queuosine (7-(((4,5-cis-dihydroxy-2-cyclopenten-1-yl)amino)methyl)-7-deazaguanosine). In Caenorhabditis elegans, this protein is Queuine tRNA-ribosyltransferase accessory subunit 2.